The sequence spans 343 residues: Selenide, water dikinase (343 aa).

Residue cysteine 15 is part of the active site. ATP contacts are provided by residues lysine 18 and 46–48; that span reads HKD. Aspartate 49 is a Mg(2+) binding site. ATP is bound by residues aspartate 66, aspartate 89, and 137–139; that span reads GHS. Aspartate 89 serves as a coordination point for Mg(2+). Aspartate 225 provides a ligand contact to Mg(2+).

This sequence belongs to the selenophosphate synthase 1 family. Class I subfamily. In terms of assembly, homodimer. The cofactor is Mg(2+).

It catalyses the reaction hydrogenselenide + ATP + H2O = selenophosphate + AMP + phosphate + 2 H(+). Its function is as follows. Synthesizes selenophosphate from selenide and ATP. This is Selenide, water dikinase from Sulfurimonas denitrificans (strain ATCC 33889 / DSM 1251) (Thiomicrospira denitrificans (strain ATCC 33889 / DSM 1251)).